The primary structure comprises 376 residues: Glutamate 5-kinase (376 aa).

Residue lysine 17 participates in ATP binding. Residues serine 56, aspartate 144, and asparagine 156 each coordinate substrate. ATP is bound by residues 176-177 and 218-224; these read TD and TGGMQSK. The PUA domain maps to 283–359; it reads KGTLLLDAGA…QSREIASVLK (77 aa).

Belongs to the glutamate 5-kinase family.

The protein localises to the cytoplasm. The catalysed reaction is L-glutamate + ATP = L-glutamyl 5-phosphate + ADP. Its pathway is amino-acid biosynthesis; L-proline biosynthesis; L-glutamate 5-semialdehyde from L-glutamate: step 1/2. Functionally, catalyzes the transfer of a phosphate group to glutamate to form L-glutamate 5-phosphate. This chain is Glutamate 5-kinase, found in Desulfotalea psychrophila (strain LSv54 / DSM 12343).